Here is a 259-residue protein sequence, read N- to C-terminus: Flagellar L-ring protein (259 aa).

Residues 1–15 form the signal peptide; that stretch reads MKRISLIALVTIMSG. Residue Cys-16 is the site of N-palmitoyl cysteine attachment. Cys-16 is lipidated: S-diacylglycerol cysteine.

Belongs to the FlgH family. As to quaternary structure, the basal body constitutes a major portion of the flagellar organelle and consists of four rings (L,P,S, and M) mounted on a central rod.

The protein localises to the cell outer membrane. Its subcellular location is the bacterial flagellum basal body. Assembles around the rod to form the L-ring and probably protects the motor/basal body from shearing forces during rotation. The polypeptide is Flagellar L-ring protein (Vibrio vulnificus (strain CMCP6)).